The sequence spans 257 residues: MAPAMESPTLLCVALLFFAPDGVLAVPQKPKVSLNPPWNRIFKGENVTLTCNGNNFFEVSSTKWFHNGSLSEETNSSLNIVNAKFEDSGEYKCQHQQVNESEPVYLEVFSDWLLLQASAEVVMEGQPLFLRCHGWRNWDVYKVIYYKDGEALKYWYENHNISITNATVEDSGTYYCTGKVWQLDYESEPLNITVIKAPREKYWLQFFIPLLVVILFAVDTGLFISTQQQVTFLLKIKRTRKGFRLLNPHPKPNPKNN.

The signal sequence occupies residues 1–25 (MAPAMESPTLLCVALLFFAPDGVLA). The Extracellular portion of the chain corresponds to 26-205 (VPQKPKVSLN…KAPREKYWLQ (180 aa)). Ig-like domains lie at 30–110 (PKVS…EVFS) and 111–193 (DWLL…LNIT). 7 N-linked (GlcNAc...) asparagine glycosylation sites follow: N46, N67, N75, N99, N160, N165, and N191. Cysteines 51 and 93 form a disulfide. Cysteines 132 and 176 form a disulfide. The helical transmembrane segment at 206-224 (FFIPLLVVILFAVDTGLFI) threads the bilayer. Over 225-257 (STQQQVTFLLKIKRTRKGFRLLNPHPKPNPKNN) the chain is Cytoplasmic.

In terms of assembly, tetramer of an alpha chain, a beta chain, and two disulfide linked gamma chains. Interacts with IGHE (via CH3 region). As to expression, expressed in eosinophils.

It localises to the cell membrane. Its function is as follows. High-affinity receptor for immunoglobulin epsilon/IgE. Mediates IgE effector functions in myeloid cells. Upon IgE binding and antigen/allergen cross-linking initiates signaling pathways that lead to myeloid cell activation and differentiation. On mast cells, basophils and eosinophils stimulates the secretion of vasoactive amines, lipid mediators and cytokines that contribute to inflammatory response, tissue remodeling and cytotoxicity against microbes. Triggers the immediate hypersensitivity response to allergens as a host defense mechanism against helminth parasites, pathogenic bacteria and venom toxicity. When dysregulated, it can elicit harmful life-threatening allergic and anaphylactic reactions. The protein is High affinity immunoglobulin epsilon receptor subunit alpha (FCER1A) of Homo sapiens (Human).